A 308-amino-acid polypeptide reads, in one-letter code: Dual oxidase maturation factor 1 (308 aa).

Topologically, residues 1 to 21 are extracellular; the sequence is MQANIFPFYPQPRTSFKFDTK. A helical membrane pass occupies residues 22–42; the sequence is IIEIIIICIVTACTFIIILPG. The Cytoplasmic portion of the chain corresponds to 43–49; the sequence is IRGKSRS. A helical membrane pass occupies residues 50 to 70; that stretch reads IWLFRILTSLFIGAVILAVNF. Residues 71–172 are Extracellular-facing; sequence TSDWETGIVT…SPCGLFQQYC (102 aa). N-linked (GlcNAc...) asparagine glycosylation is found at Asn94, Asn107, and Asn119. A helical membrane pass occupies residues 173-195; it reads ISTYYSSEIMWVAFGSWILYNVL. The Cytoplasmic portion of the chain corresponds to 196–199; it reads FSMP. The chain crosses the membrane as a helical span at residues 200–220; the sequence is VILYGICMMFVTAICMLVSLI. Residues 221–247 are Extracellular-facing; that stretch reads SFASVRQAPVCNIHFGNAVLKTHFGVS. A helical transmembrane segment spans residues 248–268; sequence YWLSLVTGLFCLIVSLVLLFL. Topologically, residues 269 to 308 are cytoplasmic; the sequence is YKTQPKVIRLIFSYGEEEDLSDKSENEEEHSSALSLNEML.

This sequence belongs to the DUOXA family.

The protein localises to the membrane. Functionally, possible role in maturation and transport from the endoplasmic reticulum to the plasma membrane of functional dual oxidase. The sequence is that of Dual oxidase maturation factor 1 (duoxa1) from Xenopus tropicalis (Western clawed frog).